Consider the following 460-residue polypeptide: Argininosuccinate lyase (460 aa).

This sequence belongs to the lyase 1 family. Argininosuccinate lyase subfamily.

The protein localises to the cytoplasm. It carries out the reaction 2-(N(omega)-L-arginino)succinate = fumarate + L-arginine. The protein operates within amino-acid biosynthesis; L-arginine biosynthesis; L-arginine from L-ornithine and carbamoyl phosphate: step 3/3. The chain is Argininosuccinate lyase from Mannheimia succiniciproducens (strain KCTC 0769BP / MBEL55E).